Reading from the N-terminus, the 234-residue chain is Viral Fc-gamma receptor-like protein IR11 (234 aa).

An N-terminal signal peptide occupies residues 1-23 (MQTYSTPLTLVIVTSLFLFTTQG). In terms of domain architecture, Ig-like V-type spans 24–122 (SSSNAVEPTK…VKDTGVYLLQ (99 aa)). Residues 24–182 (SSSNAVEPTK…DLKRQWSGLS (159 aa)) are Extracellular-facing. Residues asparagine 57, asparagine 105, and asparagine 110 are each glycosylated (N-linked (GlcNAc...) asparagine; by host). Residues 183 to 203 (LHCAWVSGMMIFVGALVICFL) form a helical membrane-spanning segment. Topologically, residues 204–234 (RSQRIGEQDAEHLRTDLDTEPLLLTVDGDLQ) are cytoplasmic.

The protein belongs to the RL11 family.

Its subcellular location is the membrane. The sequence is that of Viral Fc-gamma receptor-like protein IR11 from Homo sapiens (Human).